Here is a 104-residue protein sequence, read N- to C-terminus: Putative zinc finger protein ORF104b (104 aa).

The segment at 62–85 adopts a C2H2-type zinc-finger fold; it reads YECKYCHTRYLSHTGIVYHLEREH.

This chain is Putative zinc finger protein ORF104b, found in Acidianus sp. F28 (AFV-2).